A 125-amino-acid polypeptide reads, in one-letter code: Fumarate reductase subunit D (125 aa).

Helical transmembrane passes span 30-50 (FAMLTPITVLVLGILVPLGVI), 62-82 (AFATSIIGALFIIGTLALPMW), and 105-125 (VACYAFAGLITALAVIFIFMI).

Belongs to the FrdD family. Part of an enzyme complex containing four subunits: a flavoprotein (FrdA), an iron-sulfur protein (FrdB), and two hydrophobic anchor proteins (FrdC and FrdD).

It is found in the cell inner membrane. Its function is as follows. Anchors the catalytic components of the fumarate reductase complex to the cell membrane, binds quinones. The polypeptide is Fumarate reductase subunit D (Vibrio parahaemolyticus serotype O3:K6 (strain RIMD 2210633)).